The primary structure comprises 62 residues: Photosystem II reaction center protein Z (62 aa).

2 consecutive transmembrane segments (helical) span residues 8–28 (AVFA…VVFA) and 41–61 (FSGT…NSLI).

This sequence belongs to the PsbZ family. PSII is composed of 1 copy each of membrane proteins PsbA, PsbB, PsbC, PsbD, PsbE, PsbF, PsbH, PsbI, PsbJ, PsbK, PsbL, PsbM, PsbT, PsbY, PsbZ, Psb30/Ycf12, at least 3 peripheral proteins of the oxygen-evolving complex and a large number of cofactors. It forms dimeric complexes.

It localises to the plastid. The protein resides in the chloroplast thylakoid membrane. Functionally, may control the interaction of photosystem II (PSII) cores with the light-harvesting antenna, regulates electron flow through the 2 photosystem reaction centers. PSII is a light-driven water plastoquinone oxidoreductase, using light energy to abstract electrons from H(2)O, generating a proton gradient subsequently used for ATP formation. The sequence is that of Photosystem II reaction center protein Z from Nicotiana sylvestris (Wood tobacco).